The primary structure comprises 260 residues: Thiazole synthase (260 aa).

Lys96 (schiff-base intermediate with DXP) is an active-site residue. Residues Gly157, 184–185 (AG), and 206–207 (NT) each bind 1-deoxy-D-xylulose 5-phosphate.

This sequence belongs to the ThiG family. In terms of assembly, homotetramer. Forms heterodimers with either ThiH or ThiS.

It localises to the cytoplasm. The catalysed reaction is [ThiS sulfur-carrier protein]-C-terminal-Gly-aminoethanethioate + 2-iminoacetate + 1-deoxy-D-xylulose 5-phosphate = [ThiS sulfur-carrier protein]-C-terminal Gly-Gly + 2-[(2R,5Z)-2-carboxy-4-methylthiazol-5(2H)-ylidene]ethyl phosphate + 2 H2O + H(+). The protein operates within cofactor biosynthesis; thiamine diphosphate biosynthesis. Functionally, catalyzes the rearrangement of 1-deoxy-D-xylulose 5-phosphate (DXP) to produce the thiazole phosphate moiety of thiamine. Sulfur is provided by the thiocarboxylate moiety of the carrier protein ThiS. In vitro, sulfur can be provided by H(2)S. This Rhodopseudomonas palustris (strain ATCC BAA-98 / CGA009) protein is Thiazole synthase.